A 524-amino-acid chain; its full sequence is Unconventional prefoldin RPB5 interactor (524 aa).

Disordered regions lie at residues 1–20 (MEAPPDPRPHASAAAPLRAP), 284–320 (SVNGSSSYHSNEDDGDNNDDGGDSENDHDTLGVEDNS), and 335–373 (VRINTGKNTTLKFSEKKEEAKRKRKNSSGSGHSPQELPM). The span at 296 to 307 (DDGDNNDDGGDS) shows a compositional bias: acidic residues. S361 carries the post-translational modification Phosphoserine; by RPS6KB1. A Phosphoserine modification is found at S431.

Belongs to the RNA polymerase II subunit 5-mediating protein family. Homodimer. Component of the PAQosome complex which is responsible for the biogenesis of several protein complexes and which consists of R2TP complex members RUVBL1, RUVBL2, RPAP3 and PIH1D1, URI complex members PFDN2, PFDN6, PDRG1, UXT and URI1 as well as ASDURF, POLR2E and DNAAF10/WDR92. Interacts with POLR2E/RPB5, RUVBL2 and RUVBL1. Interacts with PFDN2, PFDN4 and STAP1; the interactions are phosphorylation-dependent and occur in a growth-dependent manner in the mitochondrion. Interacts with UXT. Interacts with PPP1CC; the interaction is phosphorylation-dependent and occurs in a growth factor-dependent manner. Interacts (via the middle C-terminal region) with GTF2F1 and GTF2F2. Interacts with DMAP1. Interacts with TSC1 and TSC2. Interacts with PRPF8 and EFTUD2 in a ZNHIT2-dependent manner. Phosphorylated. Phosphorylation occurs essentially on serine residues. Phosphorylation occurs in response to androgen treatment in prostate cancer cells in a mTOR-dependent manner. Phosphorylated; hyperhosphorylated in mitochondria in a mTORC-dependent signaling pathway. Phosphorylated at Ser-361 by RPS6KB1 in a growth factor- and rapamycin-dependent manner. S6K1-mediated mitochondrial phosphorylation at Ser-361 disrupts the URI1-PPP1CC complex in the mitochondrion, relieves PPP1CC phosphatase inhibition activity and hence engages a negative feedback diminishing RPS6KB1 kinase activity, preventing sustained S6K1-dependent signaling.

The protein localises to the nucleus. It is found in the cytoplasm. Its subcellular location is the mitochondrion. It localises to the cell projection. The protein resides in the dendrite. Involved in gene transcription regulation. Acts as a transcriptional repressor in concert with the corepressor UXT to regulate androgen receptor (AR) transcription. May act as a tumor suppressor to repress AR-mediated gene transcription and to inhibit anchorage-independent growth in prostate cancer cells. Required for cell survival in ovarian cancer cells. Together with UXT, associates with chromatin to the NKX3-1 promoter region. In terms of biological role, plays a central role in maintaining S6K1 signaling and BAD phosphorylation under normal growth conditions thereby protecting cells from potential deleterious effects of sustained S6K1 signaling. The URI1-PPP1CC complex acts as a central component of a negative feedback mechanism that counteracts excessive S6K1 survival signaling to BAD in response to growth factors. Mediates inhibition of PPP1CC phosphatase activity in mitochondria. Coordinates the regulation of nutrient-sensitive gene expression availability in a mTOR-dependent manner. Seems to be a scaffolding protein able to assemble a prefoldin-like complex that contains PFDs and proteins with roles in transcription and ubiquitination. The protein is Unconventional prefoldin RPB5 interactor (URI1) of Bos taurus (Bovine).